A 198-amino-acid polypeptide reads, in one-letter code: Molybdopterin synthase catalytic subunit (198 aa).

Substrate contacts are provided by residues 107-108 (HR), Lys123, and 130-132 (KKE).

The protein belongs to the MoaE family. MOCS2B subfamily. Heterotetramer; composed of 2 small (MOCS2A) and 2 large (MOCS2B) subunits.

The protein localises to the cytoplasm. The catalysed reaction is 2 [molybdopterin-synthase sulfur-carrier protein]-C-terminal-Gly-aminoethanethioate + cyclic pyranopterin phosphate + H2O = molybdopterin + 2 [molybdopterin-synthase sulfur-carrier protein]-C-terminal Gly-Gly + 2 H(+). Its pathway is cofactor biosynthesis; molybdopterin biosynthesis. Catalytic subunit of the molybdopterin synthase complex, a complex that catalyzes the conversion of precursor Z into molybdopterin. Acts by mediating the incorporation of 2 sulfur atoms from thiocarboxylated MOCS2A into precursor Z to generate a dithiolene group. This is Molybdopterin synthase catalytic subunit from Arabidopsis thaliana (Mouse-ear cress).